The sequence spans 412 residues: MDELLIQDPEVGRAVTLEIERQTGKLELIASENFVSAAVRQAQGSVLTHKYAEGYPGKRYYGGCEFVDIAENLAIDRAKAIFGCGYANVQPHSGSQANMGVYFACLKPGDTILGMNLSHGGHLTHGSPVNFSGRLYNVVFYGVKKETGYIDYDEVAALAREHKPTLIVAGASAYPRTIDFARFRAIADEVGAKLMVDMAHIAGLVATGLHPTPIGQAHFTTTTTHKTLRGPRGGMILSDEDNAKTLNSQIFPGIQGGPLMHVIAAKAVAFGEALRPTFVDYQQQVVKNAARLAGCLTAAGYDLVSGGTDNHLMLMDLTAKDITGKDAEHALDKAGMTANKNTVPFETRSPFVTSGVRLGTPALTTRGMKEAEMEKVAAWIVDALANVNNETRLAAISREVEVFARQFPLFAW.

(6S)-5,6,7,8-tetrahydrofolate contacts are provided by residues L117 and 121–123 (GHL). K226 is modified (N6-(pyridoxal phosphate)lysine). 349 to 351 (SPF) lines the (6S)-5,6,7,8-tetrahydrofolate pocket.

The protein belongs to the SHMT family. Homodimer. Pyridoxal 5'-phosphate is required as a cofactor.

It is found in the cytoplasm. The catalysed reaction is (6R)-5,10-methylene-5,6,7,8-tetrahydrofolate + glycine + H2O = (6S)-5,6,7,8-tetrahydrofolate + L-serine. It functions in the pathway one-carbon metabolism; tetrahydrofolate interconversion. It participates in amino-acid biosynthesis; glycine biosynthesis; glycine from L-serine: step 1/1. Catalyzes the reversible interconversion of serine and glycine with tetrahydrofolate (THF) serving as the one-carbon carrier. This reaction serves as the major source of one-carbon groups required for the biosynthesis of purines, thymidylate, methionine, and other important biomolecules. Also exhibits THF-independent aldolase activity toward beta-hydroxyamino acids, producing glycine and aldehydes, via a retro-aldol mechanism. In Nitratidesulfovibrio vulgaris (strain DSM 19637 / Miyazaki F) (Desulfovibrio vulgaris), this protein is Serine hydroxymethyltransferase.